The sequence spans 444 residues: UDP-N-acetylglucosamine 1-carboxyvinyltransferase (444 aa).

Lys22–Asn23 is a binding site for phosphoenolpyruvate. A UDP-N-acetyl-alpha-D-glucosamine-binding site is contributed by Arg94. Catalysis depends on Asp119, which acts as the Proton donor. UDP-N-acetyl-alpha-D-glucosamine is bound by residues Asp309 and Val331.

The protein belongs to the EPSP synthase family. MurA subfamily.

It localises to the cytoplasm. The enzyme catalyses phosphoenolpyruvate + UDP-N-acetyl-alpha-D-glucosamine = UDP-N-acetyl-3-O-(1-carboxyvinyl)-alpha-D-glucosamine + phosphate. It functions in the pathway cell wall biogenesis; peptidoglycan biosynthesis. In terms of biological role, cell wall formation. Adds enolpyruvyl to UDP-N-acetylglucosamine. This chain is UDP-N-acetylglucosamine 1-carboxyvinyltransferase, found in Chlamydia abortus (strain DSM 27085 / S26/3) (Chlamydophila abortus).